Here is a 416-residue protein sequence, read N- to C-terminus: Imidazolonepropionase (416 aa).

Fe(3+)-binding residues include His-78 and His-80. Zn(2+) contacts are provided by His-78 and His-80. The 4-imidazolone-5-propanoate site is built by Arg-87, Tyr-150, and His-183. Position 150 (Tyr-150) interacts with N-formimidoyl-L-glutamate. His-248 contacts Fe(3+). Residue His-248 coordinates Zn(2+). Gln-251 provides a ligand contact to 4-imidazolone-5-propanoate. Residue Asp-323 participates in Fe(3+) binding. Asp-323 contacts Zn(2+). N-formimidoyl-L-glutamate-binding residues include Asn-325 and Gly-327. Thr-328 contacts 4-imidazolone-5-propanoate.

This sequence belongs to the metallo-dependent hydrolases superfamily. HutI family. The cofactor is Zn(2+). Fe(3+) serves as cofactor.

Its subcellular location is the cytoplasm. The enzyme catalyses 4-imidazolone-5-propanoate + H2O = N-formimidoyl-L-glutamate. It participates in amino-acid degradation; L-histidine degradation into L-glutamate; N-formimidoyl-L-glutamate from L-histidine: step 3/3. Catalyzes the hydrolytic cleavage of the carbon-nitrogen bond in imidazolone-5-propanoate to yield N-formimidoyl-L-glutamate. It is the third step in the universal histidine degradation pathway. The chain is Imidazolonepropionase from Vibrio parahaemolyticus serotype O3:K6 (strain RIMD 2210633).